We begin with the raw amino-acid sequence, 343 residues long: Phosphate acyltransferase (343 aa).

It belongs to the PlsX family. As to quaternary structure, homodimer. Probably interacts with PlsY.

The protein resides in the cytoplasm. It catalyses the reaction a fatty acyl-[ACP] + phosphate = an acyl phosphate + holo-[ACP]. It functions in the pathway lipid metabolism; phospholipid metabolism. Its function is as follows. Catalyzes the reversible formation of acyl-phosphate (acyl-PO(4)) from acyl-[acyl-carrier-protein] (acyl-ACP). This enzyme utilizes acyl-ACP as fatty acyl donor, but not acyl-CoA. This chain is Phosphate acyltransferase, found in Neorickettsia sennetsu (strain ATCC VR-367 / Miyayama) (Ehrlichia sennetsu).